The chain runs to 377 residues: Succinyl-diaminopimelate desuccinylase (377 aa).

His66 is a binding site for Zn(2+). Asp68 is an active-site residue. Asp99 is a Zn(2+) binding site. Catalysis depends on Glu133, which acts as the Proton acceptor. Positions 134, 162, and 348 each coordinate Zn(2+).

This sequence belongs to the peptidase M20A family. DapE subfamily. In terms of assembly, homodimer. It depends on Zn(2+) as a cofactor. Co(2+) serves as cofactor.

It carries out the reaction N-succinyl-(2S,6S)-2,6-diaminopimelate + H2O = (2S,6S)-2,6-diaminopimelate + succinate. It participates in amino-acid biosynthesis; L-lysine biosynthesis via DAP pathway; LL-2,6-diaminopimelate from (S)-tetrahydrodipicolinate (succinylase route): step 3/3. Its function is as follows. Catalyzes the hydrolysis of N-succinyl-L,L-diaminopimelic acid (SDAP), forming succinate and LL-2,6-diaminopimelate (DAP), an intermediate involved in the bacterial biosynthesis of lysine and meso-diaminopimelic acid, an essential component of bacterial cell walls. The protein is Succinyl-diaminopimelate desuccinylase of Alcanivorax borkumensis (strain ATCC 700651 / DSM 11573 / NCIMB 13689 / SK2).